Consider the following 70-residue polypeptide: U2-agatoxin-Ao1j (70 aa).

A signal peptide spans M1–A20. A propeptide spanning residues V21–R34 is cleaved from the precursor. 3 disulfide bridges follow: C37-C53, C44-C58, and C52-C68. L69 is modified (leucine amide).

It belongs to the neurotoxin 01 (U2-agtx) family. In terms of tissue distribution, expressed by the venom gland.

The protein resides in the secreted. Insect active toxin causing rapid but reversible paralysis in crickets. No activity shown in mammals. Does not show effect on mammalian voltage-gated calcium channels. This is U2-agatoxin-Ao1j from Agelena orientalis (Funnel-web spider).